Consider the following 347-residue polypeptide: GMP reductase (347 aa).

Residue 108–131 (ADFQKTKDIMALTDDLIFICIDIA) coordinates NADP(+). The K(+) site is built by Gly181 and Gly183. The active-site Thioimidate intermediate is the Cys186. 216-239 (IIGDGGCSCAGDVSKAFGGGADFV) contacts NADP(+).

The protein belongs to the IMPDH/GMPR family. GuaC type 1 subfamily. As to quaternary structure, homotetramer.

It catalyses the reaction IMP + NH4(+) + NADP(+) = GMP + NADPH + 2 H(+). Functionally, catalyzes the irreversible NADPH-dependent deamination of GMP to IMP. It functions in the conversion of nucleobase, nucleoside and nucleotide derivatives of G to A nucleotides, and in maintaining the intracellular balance of A and G nucleotides. The sequence is that of GMP reductase from Aliivibrio fischeri (strain ATCC 700601 / ES114) (Vibrio fischeri).